Here is a 147-residue protein sequence, read N- to C-terminus: Sec-independent protein translocase protein TatB (147 aa).

Residues 1 to 21 (MFDIGFWELVVIGVVALVVLG) form a helical membrane-spanning segment. Positions 114 to 147 (EPVAPISVATPDEEPTVIPAARAQPSAEQGEVKP) are disordered.

This sequence belongs to the TatB family. As to quaternary structure, the Tat system comprises two distinct complexes: a TatABC complex, containing multiple copies of TatA, TatB and TatC subunits, and a separate TatA complex, containing only TatA subunits. Substrates initially bind to the TatABC complex, which probably triggers association of the separate TatA complex to form the active translocon.

The protein localises to the cell inner membrane. Its function is as follows. Part of the twin-arginine translocation (Tat) system that transports large folded proteins containing a characteristic twin-arginine motif in their signal peptide across membranes. Together with TatC, TatB is part of a receptor directly interacting with Tat signal peptides. TatB may form an oligomeric binding site that transiently accommodates folded Tat precursor proteins before their translocation. This is Sec-independent protein translocase protein TatB from Aeromonas hydrophila subsp. hydrophila (strain ATCC 7966 / DSM 30187 / BCRC 13018 / CCUG 14551 / JCM 1027 / KCTC 2358 / NCIMB 9240 / NCTC 8049).